The primary structure comprises 116 residues: Large ribosomal subunit protein bL19 (116 aa).

This sequence belongs to the bacterial ribosomal protein bL19 family.

Its function is as follows. This protein is located at the 30S-50S ribosomal subunit interface and may play a role in the structure and function of the aminoacyl-tRNA binding site. The chain is Large ribosomal subunit protein bL19 from Chloroflexus aggregans (strain MD-66 / DSM 9485).